The chain runs to 107 residues: Thioredoxin (107 aa).

The Thioredoxin domain maps to 2-107 (DSIVHVTDDS…QLTAFLDSNX (106 aa)). Cys32 and Cys35 are disulfide-bonded.

It belongs to the thioredoxin family.

Its function is as follows. Participates in various redox reactions through the reversible oxidation of its active center dithiol to a disulfide and catalyzes dithiol-disulfide exchange reactions. The polypeptide is Thioredoxin (trxA) (Allochromatium vinosum (Chromatium vinosum)).